The following is a 505-amino-acid chain: Deoxyguanosinetriphosphate triphosphohydrolase (505 aa).

An HD domain is found at 66-273 (RLTHSMEVQQ…MEAADDISYC (208 aa)).

The protein belongs to the dGTPase family. Type 1 subfamily. Homotetramer. Mg(2+) is required as a cofactor.

The enzyme catalyses dGTP + H2O = 2'-deoxyguanosine + triphosphate + H(+). Its function is as follows. dGTPase preferentially hydrolyzes dGTP over the other canonical NTPs. This Salmonella arizonae (strain ATCC BAA-731 / CDC346-86 / RSK2980) protein is Deoxyguanosinetriphosphate triphosphohydrolase.